The following is a 706-amino-acid chain: MKRCKSDELQQQQGEEDGAGMEDAACLLPGADLRHGEASSANSAGGPTSDAGAAVAPNPGPRSKPPDLKKIQQLSEGSMFGHGLKHLFHSRRRSREREHQASQEAQQQQQQQGLSDQDSPDEKERSPEMHRVSYAVSLHDLPARPTAFNRVLQQIRSRPSIKRGASLHSSGGSGGRRAKSSSLEPQRGSPHLLRKAPQDSSLAAILHQHQGRPRSSSTTDTALLLADGSSAYLLAEEAESIGDKGDKGDLVALSLPSGPGHGDSDGPISLDVPDGAPDPQRTKAAIEHLHQKILKITEQIKIEQEARDDNVAEYLKLANNADKQQVSRIKQVFEKKNQKSAQTIAQLHKKLEHYRRRLKEIEQNGPSRQPKDVLRDMQQGLKDVGANMRAGISGFGGGVVEGVKGSLSGLSQATHTAVVSKPREFASLIRNKFGSADNIAHLKDPMEDGPPEEAARALSGSATLVSSPKYGSDDECSSASASSAGAGSNSGAGPGGALGSPRSNTLYGAPGNLDTLLEELREIKEGQSHLEDSMEDLKTQLQRDYTYMTQCLQEERYRYERLEEQLNDLTELHQNEMTNLKQELASMEEKVAYQSYERARDIQEAVESCLTRVTKLELQQQQQQVVQLEGVENANARALLGKFINVILALMAVLLVFVSTIANFITPLMKTRLRITSTALLLLVLFLLWKHWASLTYLLEHVLLPS.

Disordered regions lie at residues 1-221 (MKRC…TTDT) and 251-280 (VALS…PDPQ). Phosphoserine is present on Ser-6. A compositionally biased stretch (basic residues) spans 83 to 94 (GLKHLFHSRRRS). Positions 102-112 (SQEAQQQQQQQ) are enriched in low complexity. Residues 120 to 131 (PDEKERSPEMHR) are compositionally biased toward basic and acidic residues. Residue Arg-163 is modified to Omega-N-methylarginine. Residues 330–365 (KQVFEKKNQKSAQTIAQLHKKLEHYRRRLKEIEQNG) are a coiled coil. Ser-435 bears the Phosphoserine mark. Positions 440 to 459 (AHLKDPMEDGPPEEAARALS) are disordered. A phosphoserine mark is found at Ser-461 and Ser-467. The tract at residues 464–510 (LVSSPKYGSDDECSSASASSAGAGSNSGAGPGGALGSPRSNTLYGAP) is disordered. The segment covering 477-487 (SSASASSAGAG) has biased composition (low complexity). Residues 488-498 (SNSGAGPGGAL) show a composition bias toward gly residues. The residue at position 500 (Ser-500) is a Phosphoserine. Residues 511–630 (GNLDTLLEEL…QQQQVVQLEG (120 aa)) are a coiled coil. 2 helical membrane-spanning segments follow: residues 646–666 (VILA…NFIT) and 679–699 (ALLL…TYLL).

Belongs to the TEX28 family. In terms of assembly, may form homodimers and heterodimers with TMCC2 or TMCC3 via the coiled-coil domains. Interacts with ribosomal proteins RPL4 and RPS6. Interacts with APOE and proteolytic processed C-terminal fragment C99 of the amyloid precursor protein (APP C99).

It is found in the endoplasmic reticulum membrane. Its function is as follows. May be involved in the regulation of the proteolytic processing of the amyloid precursor protein (APP) possibly also implicating APOE. This Mus musculus (Mouse) protein is Transmembrane and coiled-coil domains protein 2.